Reading from the N-terminus, the 966-residue chain is Aminopeptidase N (966 aa).

Residues 1 to 8 (MAKGFYIS) lie on the Cytoplasmic side of the membrane. A helical; Signal-anchor for type II membrane protein transmembrane segment spans residues 9–32 (KTLGILGILLGVAAVCTIIALSVV). Residues 33–68 (YAQEKNRNAENSATAPTLPGSTSATTATTTPAVDES) are cytosolic Ser/Thr-rich junction. The Extracellular segment spans residues 33–966 (YAQEKNRNAE…VFKWFTENSS (934 aa)). The disordered stretch occupies residues 42–64 (ENSATAPTLPGSTSATTATTTPA). A compositionally biased stretch (low complexity) spans 44–64 (SATAPTLPGSTSATTATTTPA). Residues 69 to 966 (KPWNQYRLPK…VFKWFTENSS (898 aa)) form a metalloprotease region. N-linked (GlcNAc...) asparagine glycans are attached at residues Asn-106, Asn-114, and Asn-128. Residue Tyr-176 is modified to Sulfotyrosine. Residues Asn-234, Asn-288, Asn-318, and Asn-332 are each glycosylated (N-linked (GlcNAc...) asparagine). Residue 351–355 (GAMEN) participates in substrate binding. His-387 is a Zn(2+) binding site. The active-site Proton acceptor is Glu-388. 2 residues coordinate Zn(2+): His-391 and Glu-410. Tyr-418 and Tyr-423 each carry sulfotyrosine. 4 N-linked (GlcNAc...) asparagine glycosylation sites follow: Asn-573, Asn-606, Asn-624, and Asn-734. Cysteines 760 and 767 form a disulfide. Residues Asn-784 and Asn-817 are each glycosylated (N-linked (GlcNAc...) asparagine). A disulfide bridge connects residues Cys-797 and Cys-833. Tyr-852 carries the post-translational modification Phosphotyrosine.

This sequence belongs to the peptidase M1 family. Homodimer. Interacts with SLC6A19. Requires Zn(2+) as cofactor. N- and O-glycosylated. Post-translationally, sulfated. In terms of processing, may undergo proteolysis and give rise to a soluble form. Expressed in the intestinal brush border (at protein level). Highly expressed in intestinal tract and kidney, present in liver, lymph node, spleen, and brain. Found as well in monocytes, macrophages, dendritic cells, veiled cells and B-cells but not on T-cells and thymocytes.

It is found in the cell membrane. The enzyme catalyses Release of an N-terminal amino acid, Xaa-|-Yaa- from a peptide, amide or arylamide. Xaa is preferably Ala, but may be most amino acids including Pro (slow action). When a terminal hydrophobic residue is followed by a prolyl residue, the two may be released as an intact Xaa-Pro dipeptide.. Broad specificity aminopeptidase which plays a role in the final digestion of peptides generated from hydrolysis of proteins by gastric and pancreatic proteases. Also involved in the processing of various peptides including peptide hormones, such as angiotensin III and IV, neuropeptides, and chemokines. May also be involved the cleavage of peptides bound to major histocompatibility complex class II molecules of antigen presenting cells. May have a role in angiogenesis and promote cholesterol crystallization. May have a role in amino acid transport by acting as binding partner of amino acid transporter SLC6A19 and regulating its activity. The polypeptide is Aminopeptidase N (Anpep) (Mus musculus (Mouse)).